A 180-amino-acid polypeptide reads, in one-letter code: Large ribosomal subunit protein uL5 (180 aa).

This sequence belongs to the universal ribosomal protein uL5 family. As to quaternary structure, part of the 50S ribosomal subunit; part of the 5S rRNA/L5/L18/L25 subcomplex. Contacts the 5S rRNA and the P site tRNA. Forms a bridge to the 30S subunit in the 70S ribosome.

In terms of biological role, this is one of the proteins that bind and probably mediate the attachment of the 5S RNA into the large ribosomal subunit, where it forms part of the central protuberance. In the 70S ribosome it contacts protein S13 of the 30S subunit (bridge B1b), connecting the 2 subunits; this bridge is implicated in subunit movement. Contacts the P site tRNA; the 5S rRNA and some of its associated proteins might help stabilize positioning of ribosome-bound tRNAs. This chain is Large ribosomal subunit protein uL5, found in Lactococcus lactis subsp. lactis (strain IL1403) (Streptococcus lactis).